The chain runs to 157 residues: Crossover junction endodeoxyribonuclease RuvC (157 aa).

Active-site residues include D7, E67, and D140. 3 residues coordinate Mg(2+): D7, E67, and D140.

The protein belongs to the RuvC family. As to quaternary structure, homodimer which binds Holliday junction (HJ) DNA. The HJ becomes 2-fold symmetrical on binding to RuvC with unstacked arms; it has a different conformation from HJ DNA in complex with RuvA. In the full resolvosome a probable DNA-RuvA(4)-RuvB(12)-RuvC(2) complex forms which resolves the HJ. Mg(2+) serves as cofactor.

Its subcellular location is the cytoplasm. The catalysed reaction is Endonucleolytic cleavage at a junction such as a reciprocal single-stranded crossover between two homologous DNA duplexes (Holliday junction).. In terms of biological role, the RuvA-RuvB-RuvC complex processes Holliday junction (HJ) DNA during genetic recombination and DNA repair. Endonuclease that resolves HJ intermediates. Cleaves cruciform DNA by making single-stranded nicks across the HJ at symmetrical positions within the homologous arms, yielding a 5'-phosphate and a 3'-hydroxyl group; requires a central core of homology in the junction. The consensus cleavage sequence is 5'-(A/T)TT(C/G)-3'. Cleavage occurs on the 3'-side of the TT dinucleotide at the point of strand exchange. HJ branch migration catalyzed by RuvA-RuvB allows RuvC to scan DNA until it finds its consensus sequence, where it cleaves and resolves the cruciform DNA. This chain is Crossover junction endodeoxyribonuclease RuvC, found in Rickettsia rickettsii (strain Iowa).